A 479-amino-acid chain; its full sequence is Kynurenine 3-monooxygenase (479 aa).

Belongs to the aromatic-ring hydroxylase family. KMO subfamily. The cofactor is FAD.

Its subcellular location is the mitochondrion outer membrane. It catalyses the reaction L-kynurenine + NADPH + O2 + H(+) = 3-hydroxy-L-kynurenine + NADP(+) + H2O. It participates in cofactor biosynthesis; NAD(+) biosynthesis; quinolinate from L-kynurenine: step 1/3. Catalyzes the hydroxylation of L-kynurenine (L-Kyn) to form 3-hydroxy-L-kynurenine (L-3OHKyn). Required for synthesis of quinolinic acid. The protein is Kynurenine 3-monooxygenase of Chaetomium globosum (strain ATCC 6205 / CBS 148.51 / DSM 1962 / NBRC 6347 / NRRL 1970) (Soil fungus).